Consider the following 227-residue polypeptide: Urease subunit gamma/beta (227 aa).

The interval 1–101 is urease gamma; it reads MRLTPTERDR…LAVVTDPIGG (101 aa). Residues 102–227 form a urease beta region; sequence GLGDQAPGAL…ACGYLGVEQR (126 aa).

This sequence in the N-terminal section; belongs to the urease gamma subunit family. The protein in the C-terminal section; belongs to the urease beta subunit family. Heterohexamer of 3 UreC (alpha) and 3 UreAB (gamma/beta) subunits.

The protein resides in the cytoplasm. The catalysed reaction is urea + 2 H2O + H(+) = hydrogencarbonate + 2 NH4(+). It participates in nitrogen metabolism; urea degradation; CO(2) and NH(3) from urea (urease route): step 1/1. This Streptomyces avermitilis (strain ATCC 31267 / DSM 46492 / JCM 5070 / NBRC 14893 / NCIMB 12804 / NRRL 8165 / MA-4680) protein is Urease subunit gamma/beta.